Reading from the N-terminus, the 104-residue chain is Complex III assembly factor LYRM7 (104 aa).

Ser60 bears the Phosphoserine mark.

Belongs to the complex I LYR family. Interacts with UQCRFS1.

Its subcellular location is the mitochondrion matrix. Functionally, assembly factor required for Rieske Fe-S protein UQCRFS1 incorporation into the cytochrome b-c1 (CIII) complex. Functions as a chaperone, binding to this subunit within the mitochondrial matrix and stabilizing it prior to its translocation and insertion into the late CIII dimeric intermediate within the mitochondrial inner membrane. This is Complex III assembly factor LYRM7 (Lyrm7) from Mus musculus (Mouse).